An 800-amino-acid chain; its full sequence is N,N'-diacetylchitobiose phosphorylase (800 aa).

Positions 333, 343, 349, 350, 490, and 492 each coordinate N-acetyl-alpha-D-glucosamine 1-phosphate. Asp492 functions as the Proton donor in the catalytic mechanism. Residues Asp492, Lys636, and Glu637 each coordinate N-acetyl-D-glucosamine. Residues Glu637, His644, Gln690, Thr709, and Gly710 each contribute to the N-acetyl-alpha-D-glucosamine 1-phosphate site.

This sequence belongs to the glycosyl hydrolase 94 family. As to quaternary structure, homodimer.

The catalysed reaction is N,N'-diacetylchitobiose + phosphate = N-acetyl-alpha-D-glucosamine 1-phosphate + N-acetyl-D-glucosamine. Functionally, catalyzes the reversible phosphorolysis of chitobiose (N,N'-diacetylchitobiose or (GlcNAc)(2)) into N-acetyl-alpha-D-glucosamine 1-phosphate (GlcNAc-1-P) and N-acetyl-D-glucosamine (GlcNAc) with inversion of the anomeric configuration. In Vibrio furnissii, this protein is N,N'-diacetylchitobiose phosphorylase.